Consider the following 122-residue polypeptide: Nitrogen fixation nifHD region GlnB-like protein 2 (122 aa).

Belongs to the P(II) protein family.

Its function is as follows. Could be involved in the regulation of nitrogen fixation. This Methanobacterium ivanovii protein is Nitrogen fixation nifHD region GlnB-like protein 2 (glnBB).